The following is a 530-amino-acid chain: PTS system maltose-specific EIICB component (530 aa).

Residues 1–431 (MTAKTAPKVT…FNLKTPGRDS (431 aa)) enclose the PTS EIIC type-1 domain. 10 consecutive transmembrane segments (helical) span residues 22–42 (FMLPVALLSFCGIMLGIGSSL), 69–89 (IGSFAFSFLPVMFCIAIPLGL), 96–116 (VAAFAGFIGYAVMNLAVNFWL), 138–158 (ILGIQSIDTGILGAVIAGIIV), 189–209 (LVMGLVGLVIPLVWPIFAMGI), 289–309 (FLSQGKMPAFLGGLPGAALAM), 321–341 (IKGLLISGLIACVVGGTTEPL), 343–363 (FLFLFVAPVLYVIHALLTGLG), 369–389 (VLGVTIGNTDGNIIDFVVFGI), and 399–419 (MVPVVAAIWFVVYYVIFRFAI). In terms of domain architecture, PTS EIIB type-1 spans 449 to 530 (GYNVPAILEA…MAGLMHTVQA (82 aa)). Cysteine 471 acts as the Phosphocysteine intermediate; for EIIB activity in catalysis.

The protein resides in the cell inner membrane. It carries out the reaction D-maltose(out) + N(pros)-phospho-L-histidyl-[protein] = alpha-maltose 6'-phosphate(in) + L-histidyl-[protein]. Its function is as follows. The phosphoenolpyruvate-dependent sugar phosphotransferase system (sugar PTS), a major carbohydrate active transport system, catalyzes the phosphorylation of incoming sugar substrates concomitantly with their translocation across the cell membrane. This system is involved in maltose transport. MalX can also recognize and transport glucose even though this sugar may not represent the natural substrate of the system. The chain is PTS system maltose-specific EIICB component from Escherichia coli (strain K12).